Here is a 356-residue protein sequence, read N- to C-terminus: Chaperone protein DnaJ (356 aa).

One can recognise a J domain in the interval 5-69; sequence DYYQILGVSK…ERRKEYDRIL (65 aa). The CR-type zinc-finger motif lies at 121 to 197; it reads GCEKDIEYER…CSGRGRVAMH (77 aa). Zn(2+)-binding residues include C134, C137, C151, C154, C171, C174, C185, and C188. 4 CXXCXGXG motif repeats span residues 134–141, 151–158, 171–178, and 185–192; these read CPTCEGKG, CHACEGTG, CSVCKGRG, and CPACSGRG.

Belongs to the DnaJ family. In terms of assembly, homodimer. The cofactor is Zn(2+).

Its subcellular location is the cytoplasm. Participates actively in the response to hyperosmotic and heat shock by preventing the aggregation of stress-denatured proteins and by disaggregating proteins, also in an autonomous, DnaK-independent fashion. Unfolded proteins bind initially to DnaJ; upon interaction with the DnaJ-bound protein, DnaK hydrolyzes its bound ATP, resulting in the formation of a stable complex. GrpE releases ADP from DnaK; ATP binding to DnaK triggers the release of the substrate protein, thus completing the reaction cycle. Several rounds of ATP-dependent interactions between DnaJ, DnaK and GrpE are required for fully efficient folding. Also involved, together with DnaK and GrpE, in the DNA replication of plasmids through activation of initiation proteins. This is Chaperone protein DnaJ from Hydrogenobacter thermophilus (strain DSM 6534 / IAM 12695 / TK-6).